The following is a 501-amino-acid chain: MEPQDPVKREGRLTPVIVLATLIAAFGSSFQYGYNVATINSPSEFMKDFYNYTYYDRVGEYMNEFYLTLLWSVTVSMFPFGGFLGSLMVGPLVNNLGRKGTLLFNNIFSIVPALLMGFSDLAKSFEMIIVARVLVGICAGLSSNVVPMYLGELAPKNWRGALGVVPQLFITIGILVAQIFGLRSLLANEEGWPILLGLTGIPAVLQLLFLPFFPESPRYLLIQKKDEEAAKRALRRLRGWHDVDAEIEEILEEDRAEKAAGFISVLKLFKMRSLRWQVISIIVLMAGQQLSGVNAIYYYADQIYLSAGVKEDDVQYVTAGTGAVNVLITVCAIFVVELMGRRFLLLLGFSVCFTACCVLTGALAMQDVISWMPYVSIACVISYVIGHALGPSPIPALLVTEIFLQSSRPAAYMVAGTVHWLSNFTVGLVFPFIQVGLGAYSFVIFAVICFLTTVYIFLIIPETKSKTFIEINQIFIKMNKVPGVHPEKEELKEFPPSTARQ.

Methionine 1 bears the N-acetylmethionine mark. The Cytoplasmic portion of the chain corresponds to methionine 1–valine 18. A helical membrane pass occupies residues leucine 19–isoleucine 39. Tyrosine 32 lines the D-fructose pocket. Residues asparagine 40 to threonine 68 lie on the Extracellular side of the membrane. N-linked (GlcNAc...) asparagine glycosylation occurs at asparagine 51. Residues leucine 69 to proline 91 form a helical membrane-spanning segment. Over leucine 92–arginine 98 the chain is Cytoplasmic. A helical transmembrane segment spans residues lysine 99 to serine 119. Topologically, residues aspartate 120–glutamate 126 are extracellular. A helical transmembrane segment spans residues methionine 127–tyrosine 149. The Cytoplasmic portion of the chain corresponds to leucine 150–alanine 161. The chain crosses the membrane as a helical span at residues leucine 162 to leucine 182. Residue glutamine 167 participates in D-fructose binding. Residues arginine 183–tryptophan 192 are Extracellular-facing. The chain crosses the membrane as a helical span at residues proline 193–phenylalanine 213. The Cytoplasmic portion of the chain corresponds to proline 214–glutamine 277. A helical membrane pass occupies residues valine 278–tyrosine 298. D-fructose is bound by residues glutamine 288 and isoleucine 296–tyrosine 298. At tyrosine 299–aspartate 313 the chain is on the extracellular side. Residues valine 314–phenylalanine 334 traverse the membrane as a helical segment. The Cytoplasmic portion of the chain corresponds to valine 335–arginine 342. The chain crosses the membrane as a helical span at residues phenylalanine 343 to leucine 363. Residues alanine 364–tryptophan 371 lie on the Extracellular side of the membrane. Residues methionine 372–isoleucine 394 traverse the membrane as a helical segment. Residue histidine 387 coordinates D-fructose. Residues proline 395 to tyrosine 412 are Cytoplasmic-facing. The chain crosses the membrane as a helical span at residues methionine 413–isoleucine 433. D-fructose is bound at residue histidine 419 to tryptophan 420. Residues glutamine 434–alanine 439 lie on the Extracellular side of the membrane. Residues tyrosine 440–isoleucine 460 traverse the membrane as a helical segment. At proline 461–glutamine 501 the chain is on the cytoplasmic side.

The protein belongs to the major facilitator superfamily. Sugar transporter (TC 2.A.1.1) family. Glucose transporter subfamily.

Its subcellular location is the apical cell membrane. It localises to the cell membrane. The protein resides in the sarcolemma. The enzyme catalyses D-fructose(out) = D-fructose(in). Functions as a fructose transporter that has only low activity with other monosaccharides. Can mediate the uptake of deoxyglucose, but with low efficiency. Essential for fructose uptake in the small intestine. Plays a role in the regulation of salt uptake and blood pressure in response to dietary fructose. Required for the development of high blood pressure in response to high dietary fructose intake. The protein is Solute carrier family 2, facilitated glucose transporter member 5 of Ovis aries (Sheep).